Here is a 130-residue protein sequence, read N- to C-terminus: MVLTLSNQFLAKIPATPKTLTLPKTSSSTLRPQWSCRKSDIHPEFREDAKVYCNGELVMTTGGTQKDYTVEVWSGNHPFYLGNRSALLLDADQVEKFRKKYGELTQIMEIPVLKGEIILPPKKKSKAKKK.

A chloroplast-targeting transit peptide spans 1 to 36 (MVLTLSNQFLAKIPATPKTLTLPKTSSSTLRPQWSC).

This sequence belongs to the bacterial ribosomal protein bL31 family. Type A subfamily. In terms of assembly, component of the chloroplast large ribosomal subunit (LSU). Mature 70S chloroplast ribosomes of higher plants consist of a small (30S) and a large (50S) subunit. The 30S small subunit contains 1 molecule of ribosomal RNA (16S rRNA) and 24 different proteins. The 50S large subunit contains 3 rRNA molecules (23S, 5S and 4.5S rRNA) and 33 different proteins.

Its subcellular location is the plastid. It localises to the chloroplast. Functionally, component of the chloroplast ribosome (chloro-ribosome), a dedicated translation machinery responsible for the synthesis of chloroplast genome-encoded proteins, including proteins of the transcription and translation machinery and components of the photosynthetic apparatus. This Spinacia oleracea (Spinach) protein is Large ribosomal subunit protein bL31c (RPL31).